The sequence spans 242 residues: HTH-type transcriptional regulator GadW (242 aa).

The HTH araC/xylS-type domain occupies 139–236 (GKVERLISFD…GVTPHQFSQH (98 aa)). DNA-binding regions (H-T-H motif) lie at residues 156–177 (RDIA…QDEN) and 203–226 (LHTI…RQYY).

As to quaternary structure, homodimer.

Depending on the conditions (growth phase and medium), acts as a positive or negative regulator of gadA and gadBC. Repression occurs directly or via the repression of the expression of gadX. Activation occurs directly by the binding of GadW to the gadA and gadBC promoters. The polypeptide is HTH-type transcriptional regulator GadW (gadW) (Escherichia coli O6:H1 (strain CFT073 / ATCC 700928 / UPEC)).